The primary structure comprises 346 residues: Small ribosomal subunit biogenesis GTPase RsgA (346 aa).

The tract at residues 1-26 (MAKRKLTQNQTRRIQSNNAKTLHRHK) is disordered. A compositionally biased stretch (polar residues) spans 7–20 (TQNQTRRIQSNNAK). The CP-type G domain maps to 103-271 (ENEISRPDYY…LIDSPGIREF (169 aa)). Residues 159-162 (NKVD) and 213-221 (GQSGVGKSS) contribute to the GTP site. Zn(2+) contacts are provided by cysteine 295, cysteine 300, histidine 302, and cysteine 308.

The protein belongs to the TRAFAC class YlqF/YawG GTPase family. RsgA subfamily. In terms of assembly, monomer. Associates with 30S ribosomal subunit, binds 16S rRNA. Requires Zn(2+) as cofactor.

The protein resides in the cytoplasm. One of several proteins that assist in the late maturation steps of the functional core of the 30S ribosomal subunit. Helps release RbfA from mature subunits. May play a role in the assembly of ribosomal proteins into the subunit. Circularly permuted GTPase that catalyzes slow GTP hydrolysis, GTPase activity is stimulated by the 30S ribosomal subunit. The polypeptide is Small ribosomal subunit biogenesis GTPase RsgA (Haemophilus influenzae (strain 86-028NP)).